We begin with the raw amino-acid sequence, 136 residues long: Histone H3.3 (136 aa).

Residues Met-1 to Tyr-42 are disordered. Lys-5 carries the post-translational modification N6,N6,N6-trimethyllysine; alternate. Lys-5 is modified (N6,N6-dimethyllysine; alternate). 2 positions are modified to N6-methyllysine; alternate: Lys-5 and Lys-10. The residue at position 10 (Lys-10) is an N6-acetyllysine; alternate. Residue Ser-11 is modified to Phosphoserine. Lys-15 carries the post-translational modification N6,N6-dimethyllysine; alternate. N6-acetyllysine; alternate occurs at positions 15, 19, 24, 28, and 37. 4 positions are modified to N6-methyllysine; alternate: Lys-19, Lys-24, Lys-28, and Lys-37. An N6,N6,N6-trimethyllysine; alternate mark is found at Lys-28 and Lys-37. 2 positions are modified to N6,N6-dimethyllysine; alternate: Lys-28 and Lys-37. An N6-acetyllysine mark is found at Lys-57 and Lys-65. At Lys-80 the chain carries N6,N6,N6-trimethyllysine; alternate. N6,N6-dimethyllysine; alternate is present on Lys-80. The residue at position 80 (Lys-80) is an N6-methyllysine; alternate.

This sequence belongs to the histone H3 family. In terms of assembly, the nucleosome is a histone octamer containing two molecules each of H2A, H2B, H3 and H4 assembled in one H3-H4 heterotetramer and two H2A-H2B heterodimers. The octamer wraps approximately 147 bp of DNA. In terms of processing, phosphorylated by IPL1 to form H3S10ph. H3S10ph promotes subsequent H3K14ac formation by GCN5 and is required for transcriptional activation through TBP recruitment to the promoters. Post-translationally, mono-, di- and trimethylated by the COMPASS complex to form H3K4me1/2/3. H3K4me activates gene expression by regulating transcription elongation and plays a role in telomere length maintenance. H3K4me enrichment correlates with transcription levels, and occurs in a 5' to 3' gradient with H3K4me3 enrichment at the 5'-end of genes, shifting to H3K4me2 and then H3K4me1. Methylated by SET2 to form H3K36me. H3K36me represses gene expression. Methylated by DOT1 to form H3K79me. H3K79me is required for association of SIR proteins with telomeric regions and for telomeric silencing. The COMPASS-mediated formation of H3K4me2/3 and the DOT1-mediated formation of H3K79me require H2BK123ub1. Acetylation of histone H3 leads to transcriptional activation. H3K14ac formation by GCN5 is promoted by H3S10ph. H3K14ac can also be formed by ESA1. H3K56ac formation occurs predominantly in newly synthesized H3 molecules during G1, S and G2/M of the cell cycle and may be involved in DNA repair.

The protein localises to the nucleus. It localises to the chromosome. In terms of biological role, core component of nucleosome. Nucleosomes wrap and compact DNA into chromatin, limiting DNA accessibility to the cellular machineries which require DNA as a template. Histones thereby play a central role in transcription regulation, DNA repair, DNA replication and chromosomal stability. DNA accessibility is regulated via a complex set of post-translational modifications of histones, also called histone code, and nucleosome remodeling. This chain is Histone H3.3 (HHT3), found in Debaryomyces hansenii (strain ATCC 36239 / CBS 767 / BCRC 21394 / JCM 1990 / NBRC 0083 / IGC 2968) (Yeast).